The chain runs to 167 residues: MEFTAKANFVRVSPQKARLVLDLIKGQRVEDALNTLLFTKKGIAPAIYKLVHSAMDNANYLSNEKGLDLDLDRLYVKKAIANDGPRMKRIRPAPMGRAFRYQRRISHIEISLAEKPGFQGSTATTVEDEAPKAKGAKGAKAKKAPAKKAAAKKAPAKKFAGKKTAKR.

Residues 120–167 are disordered; that stretch reads GSTATTVEDEAPKAKGAKGAKAKKAPAKKAAAKKAPAKKFAGKKTAKR. Positions 134–167 are enriched in basic residues; the sequence is KGAKGAKAKKAPAKKAAAKKAPAKKFAGKKTAKR.

The protein belongs to the universal ribosomal protein uL22 family. As to quaternary structure, part of the 50S ribosomal subunit.

This protein binds specifically to 23S rRNA; its binding is stimulated by other ribosomal proteins, e.g. L4, L17, and L20. It is important during the early stages of 50S assembly. It makes multiple contacts with different domains of the 23S rRNA in the assembled 50S subunit and ribosome. Functionally, the globular domain of the protein is located near the polypeptide exit tunnel on the outside of the subunit, while an extended beta-hairpin is found that lines the wall of the exit tunnel in the center of the 70S ribosome. The chain is Large ribosomal subunit protein uL22 from Koribacter versatilis (strain Ellin345).